A 701-amino-acid chain; its full sequence is DNA ligase A (701 aa).

The tract at residues 1–23 (MSEKATGEVEAELPEHPDADERR) is disordered. NAD(+) is bound by residues 49-53 (DAEFD), 99-100 (SL), and Glu129. Residue Lys131 is the N6-AMP-lysine intermediate of the active site. The NAD(+) site is built by Arg152, Glu192, Lys308, and Lys332. Residues Cys426, Cys429, Cys445, and Cys451 each contribute to the Zn(2+) site. The region spanning 615–701 (SIERTLEGLS…EQGPPVEPAE (87 aa)) is the BRCT domain.

This sequence belongs to the NAD-dependent DNA ligase family. LigA subfamily. Mg(2+) serves as cofactor. It depends on Mn(2+) as a cofactor.

It carries out the reaction NAD(+) + (deoxyribonucleotide)n-3'-hydroxyl + 5'-phospho-(deoxyribonucleotide)m = (deoxyribonucleotide)n+m + AMP + beta-nicotinamide D-nucleotide.. Functionally, DNA ligase that catalyzes the formation of phosphodiester linkages between 5'-phosphoryl and 3'-hydroxyl groups in double-stranded DNA using NAD as a coenzyme and as the energy source for the reaction. It is essential for DNA replication and repair of damaged DNA. Probably the only ligase required for non-homologous end joining (NHEJ) repair of 3-overhangs. The protein is DNA ligase A of Mycolicibacterium smegmatis (strain ATCC 700084 / mc(2)155) (Mycobacterium smegmatis).